Consider the following 143-residue polypeptide: Nucleoside diphosphate kinase (143 aa).

6 residues coordinate ATP: K11, F59, R87, T93, R104, and N114. The Pros-phosphohistidine intermediate role is filled by H117.

It belongs to the NDK family. As to quaternary structure, homotetramer. Requires Mg(2+) as cofactor.

Its subcellular location is the cytoplasm. The enzyme catalyses a 2'-deoxyribonucleoside 5'-diphosphate + ATP = a 2'-deoxyribonucleoside 5'-triphosphate + ADP. It catalyses the reaction a ribonucleoside 5'-diphosphate + ATP = a ribonucleoside 5'-triphosphate + ADP. Functionally, major role in the synthesis of nucleoside triphosphates other than ATP. The ATP gamma phosphate is transferred to the NDP beta phosphate via a ping-pong mechanism, using a phosphorylated active-site intermediate. This chain is Nucleoside diphosphate kinase, found in Shigella boydii serotype 4 (strain Sb227).